A 463-amino-acid polypeptide reads, in one-letter code: L-seryl-tRNA(Sec) selenium transferase (463 aa).

Lys-295 carries the N6-(pyridoxal phosphate)lysine modification.

The protein belongs to the SelA family. As to quaternary structure, homodecamer; pentamer of dimers. Binds only one seryl-tRNA(Sec) per dimer. The cofactor is pyridoxal 5'-phosphate.

The protein resides in the cytoplasm. The catalysed reaction is L-seryl-tRNA(Sec) + selenophosphate + H(+) = L-selenocysteinyl-tRNA(Sec) + phosphate. It functions in the pathway aminoacyl-tRNA biosynthesis; selenocysteinyl-tRNA(Sec) biosynthesis; selenocysteinyl-tRNA(Sec) from L-seryl-tRNA(Sec) (bacterial route): step 1/1. In terms of biological role, converts seryl-tRNA(Sec) to selenocysteinyl-tRNA(Sec) required for selenoprotein biosynthesis. The polypeptide is L-seryl-tRNA(Sec) selenium transferase (Shigella sonnei (strain Ss046)).